Reading from the N-terminus, the 731-residue chain is Polyadenylate-binding protein, cytoplasmic and nuclear (731 aa).

Over residues 1–10 (MSADVSTTPA) the composition is skewed to polar residues. The segment at 1-51 (MSADVSTTPAAENVNGAAEASPAPAAAAPSATTPEVTAVENSTPAPAANQP) is disordered. Residues 17 to 39 (AAEASPAPAAAAPSATTPEVTAV) are compositionally biased toward low complexity. 4 RRM domains span residues 54-132 (ASLY…WSQR), 142-219 (GNVF…HHIS), 235-312 (TNVY…RAQK), and 338-472 (VNLY…LAQR). Disordered regions lie at residues 369-429 (VMRD…SDKK) and 603-665 (GGRG…NAQT). Residues 616-627 (GMRGGPGYGQGR) are compositionally biased toward gly residues. Residues 645-656 (QNAAAPAGPQEG) show a composition bias toward low complexity. The 74-residue stretch at 658-731 (AGGVNAQTLG…MRPLAFTMST (74 aa)) folds into the PABC domain.

This sequence belongs to the polyadenylate-binding protein type-1 family.

Its subcellular location is the cytoplasm. The protein localises to the nucleus. Binds the poly(A) tail of mRNA. Appears to be an important mediator of the multiple roles of the poly(A) tail in mRNA biogenesis, stability and translation. In the nucleus, involved in both mRNA cleavage and polyadenylation. Is also required for efficient mRNA export to the cytoplasm. Acts in concert with a poly(A)-specific nuclease (PAN) to affect poly(A) tail shortening, which may occur concomitantly with either nucleocytoplasmic mRNA transport or translational initiation. In the cytoplasm, stimulates translation initiation and regulates mRNA decay through translation termination-coupled poly(A) shortening, probably mediated by PAN. The protein is Polyadenylate-binding protein, cytoplasmic and nuclear (pab1) of Aspergillus niger (strain ATCC MYA-4892 / CBS 513.88 / FGSC A1513).